The primary structure comprises 635 residues: Ligand-gated ion channel 4 (635 aa).

The signal sequence occupies residues Met-1–Ala-24. The Extracellular portion of the chain corresponds to Gly-25–Tyr-324. Asn-46, Asn-139, Asn-177, and Asn-225 each carry an N-linked (GlcNAc...) asparagine glycan. Cys-238 and Cys-252 are oxidised to a cystine. Asn-282 is a glycosylation site (N-linked (GlcNAc...) asparagine). A run of 3 helical transmembrane segments spans residues Val-325 to Met-345, Met-355 to Pro-375, and Val-381 to Val-401. The Cytoplasmic portion of the chain corresponds to Asn-402–Leu-599. A helical membrane pass occupies residues Leu-600–Val-620. Asn-625 is a glycosylation site (N-linked (GlcNAc...) asparagine).

The protein belongs to the ligand-gated ion channel (TC 1.A.9) family.

It is found in the postsynaptic cell membrane. Its subcellular location is the cell membrane. Functionally, possible acetylcholine receptor. This chain is Ligand-gated ion channel 4 (lgc-4), found in Caenorhabditis elegans.